Here is a 206-residue protein sequence, read N- to C-terminus: Cytochrome b6-f complex iron-sulfur subunit, chloroplastic (206 aa).

Residues 1-29 constitute a chloroplast transit peptide; it reads MAMLSSRRVAAPAKASAIRRSRVMPVVRA. A helical membrane pass occupies residues 39–68; sequence MNKRNIMNLILAGGAGLPITTLALGYGAFF. The Rieske domain maps to 92-188; that stretch reads AGEWLKTHLA…CDVAESGLVT (97 aa). Residues cysteine 134, histidine 136, cysteine 152, and histidine 155 each contribute to the [2Fe-2S] cluster site. The cysteines at positions 139 and 154 are disulfide-linked.

This sequence belongs to the Rieske iron-sulfur protein family. The 4 large subunits of the cytochrome b6-f complex are cytochrome b6, subunit IV (17 kDa polypeptide, petD), cytochrome f and the Rieske protein, while the 4 small subunits are petG, petL, petM and petN. The complex functions as a dimer. Requires [2Fe-2S] cluster as cofactor.

The protein resides in the plastid. It localises to the chloroplast thylakoid membrane. It carries out the reaction 2 oxidized [plastocyanin] + a plastoquinol + 2 H(+)(in) = 2 reduced [plastocyanin] + a plastoquinone + 4 H(+)(out). Component of the cytochrome b6-f complex, which mediates electron transfer between photosystem II (PSII) and photosystem I (PSI), cyclic electron flow around PSI, and state transitions. This is Cytochrome b6-f complex iron-sulfur subunit, chloroplastic (petC) from Chlamydomonas reinhardtii (Chlamydomonas smithii).